Reading from the N-terminus, the 467-residue chain is ATP synthase subunit beta (467 aa).

156 to 163 (GGAGVGKT) contributes to the ATP binding site.

This sequence belongs to the ATPase alpha/beta chains family. In terms of assembly, F-type ATPases have 2 components, CF(1) - the catalytic core - and CF(0) - the membrane proton channel. CF(1) has five subunits: alpha(3), beta(3), gamma(1), delta(1), epsilon(1). CF(0) has three main subunits: a(1), b(2) and c(9-12). The alpha and beta chains form an alternating ring which encloses part of the gamma chain. CF(1) is attached to CF(0) by a central stalk formed by the gamma and epsilon chains, while a peripheral stalk is formed by the delta and b chains.

The protein localises to the cell membrane. The enzyme catalyses ATP + H2O + 4 H(+)(in) = ADP + phosphate + 5 H(+)(out). Its function is as follows. Produces ATP from ADP in the presence of a proton gradient across the membrane. The catalytic sites are hosted primarily by the beta subunits. The polypeptide is ATP synthase subunit beta (Cytobacillus firmus (Bacillus firmus)).